Consider the following 158-residue polypeptide: Transcriptional repressor NrdR (158 aa).

A zinc finger spans residues 3 to 34 (CPSCQNTDSRVLESRAADAGRSVRRRRECLHC). The region spanning 49-139 (ITVLKRNGNR…VYRHFRGIND (91 aa)) is the ATP-cone domain.

It belongs to the NrdR family. Zn(2+) is required as a cofactor.

Functionally, negatively regulates transcription of bacterial ribonucleotide reductase nrd genes and operons by binding to NrdR-boxes. This Prochlorococcus marinus (strain MIT 9303) protein is Transcriptional repressor NrdR.